A 307-amino-acid chain; its full sequence is MLSVVEGILILVVISESVFGVLGNGFIGLVNCIDCAKNKLSTIGFILTGLAISRIFLIWIIITDGFIQIFSPDVYASGNLIEYISYFWVITNQSSIWFATSLSIFYFLKIANFSNYIFLWLKSRINRVLPLLMGFLLISCLLNFAYIVKILNDLKMKNDTVWRLNMYKSEYFIKQLLLNLGVIFFFTLSLITSVLLIISLWRHNRQMQSNVTGLRDSITEAHVKAMKVLISFIILFILYFIGIAIEISYFTVPENKLLLIFGMTTTAIYPWGHSFILILGNSKLKQASLRVLQQLKCCEERKNLRAT.

The Extracellular segment spans residues 1 to 6 (MLSVVE). A helical membrane pass occupies residues 7–27 (GILILVVISESVFGVLGNGFI). Topologically, residues 28-42 (GLVNCIDCAKNKLST) are cytoplasmic. Residues 43-63 (IGFILTGLAISRIFLIWIIIT) traverse the membrane as a helical segment. Topologically, residues 64–100 (DGFIQIFSPDVYASGNLIEYISYFWVITNQSSIWFAT) are extracellular. An N-linked (GlcNAc...) asparagine glycan is attached at Asn92. Residues 101–121 (SLSIFYFLKIANFSNYIFLWL) traverse the membrane as a helical segment. At 122-126 (KSRIN) the chain is on the cytoplasmic side. A helical transmembrane segment spans residues 127 to 147 (RVLPLLMGFLLISCLLNFAYI). The Extracellular portion of the chain corresponds to 148–179 (VKILNDLKMKNDTVWRLNMYKSEYFIKQLLLN). The N-linked (GlcNAc...) asparagine glycan is linked to Asn158. A helical membrane pass occupies residues 180 to 200 (LGVIFFFTLSLITSVLLIISL). The Cytoplasmic segment spans residues 201 to 227 (WRHNRQMQSNVTGLRDSITEAHVKAMK). A helical membrane pass occupies residues 228–248 (VLISFIILFILYFIGIAIEIS). The Extracellular segment spans residues 249-257 (YFTVPENKL). Residues 258–278 (LLIFGMTTTAIYPWGHSFILI) traverse the membrane as a helical segment. Residues 279-307 (LGNSKLKQASLRVLQQLKCCEERKNLRAT) are Cytoplasmic-facing.

Belongs to the G-protein coupled receptor T2R family.

Its subcellular location is the membrane. Its function is as follows. Receptor that may play a role in the perception of bitterness and is gustducin-linked. May play a role in sensing the chemical composition of the gastrointestinal content. The activity of this receptor may stimulate alpha gustducin, mediate PLC-beta-2 activation and lead to the gating of TRPM5. The chain is Taste receptor type 2 member 10 (TAS2R10) from Papio hamadryas (Hamadryas baboon).